Here is a 51-residue protein sequence, read N- to C-terminus: Large ribosomal subunit protein bL33 (51 aa).

Belongs to the bacterial ribosomal protein bL33 family.

In Acinetobacter baylyi (strain ATCC 33305 / BD413 / ADP1), this protein is Large ribosomal subunit protein bL33.